Here is a 359-residue protein sequence, read N- to C-terminus: Bergaptol O-methyltransferase (359 aa).

A bergaptol-binding site is contributed by His-126. Residues Ser-179, Gly-203, Asp-226, Asp-246, and Lys-260 each coordinate S-adenosyl-L-homocysteine. His-264 serves as a coordination point for bergaptol. His-264 (proton acceptor) is an active-site residue.

It belongs to the class I-like SAM-binding methyltransferase superfamily. Cation-independent O-methyltransferase family. COMT subfamily.

It catalyses the reaction a 5-hydroxyfurocoumarin + S-adenosyl-L-methionine = a 5-methoxyfurocoumarin + S-adenosyl-L-homocysteine + H(+). The enzyme catalyses bergaptol + S-adenosyl-L-methionine = bergapten + S-adenosyl-L-homocysteine. Its activity is regulated as follows. Inhibited by Cu(2+), Ni(2+) and Co(2+). This is Bergaptol O-methyltransferase from Glehnia littoralis (Beach silvertop).